The following is a 153-amino-acid chain: HTH-type transcriptional regulator Zrp (153 aa).

Residues 2–63 (IDYRDRHILS…LLDRKKINLP (62 aa)) form the HTH asnC-type domain. A DNA-binding region (H-T-H motif) is located at residues 21–40 (LAEIAERVALSVSACSRRVA).

This Zymomonas mobilis subsp. mobilis (strain ATCC 10988 / DSM 424 / LMG 404 / NCIMB 8938 / NRRL B-806 / ZM1) protein is HTH-type transcriptional regulator Zrp (zrp).